An 843-amino-acid chain; its full sequence is Protein translocase subunit SecA (843 aa).

ATP is bound by residues Gln85, 103–107 (GEGKT), and Asp490. Residues 799-834 (KNAVENRSDDSLPKQPVKAEPRVGRNDPCPCGSGKK) form a disordered region. Positions 802 to 823 (VENRSDDSLPKQPVKAEPRVGR) are enriched in basic and acidic residues. Zn(2+) contacts are provided by Cys827, Cys829, Cys838, and Cys839.

It belongs to the SecA family. Monomer and homodimer. Part of the essential Sec protein translocation apparatus which comprises SecA, SecYEG and auxiliary proteins SecDF. Other proteins may also be involved. Zn(2+) is required as a cofactor.

It is found in the cell membrane. It localises to the cytoplasm. The catalysed reaction is ATP + H2O + cellular proteinSide 1 = ADP + phosphate + cellular proteinSide 2.. Functionally, part of the Sec protein translocase complex. Interacts with the SecYEG preprotein conducting channel. Has a central role in coupling the hydrolysis of ATP to the transfer of proteins into and across the cell membrane, serving as an ATP-driven molecular motor driving the stepwise translocation of polypeptide chains across the membrane. The protein is Protein translocase subunit SecA of Heliobacterium modesticaldum (strain ATCC 51547 / Ice1).